The sequence spans 131 residues: Cyclin-dependent kinase 4 inhibitor B (131 aa).

ANK repeat units follow at residues 6–35 (GGDA…DPNR), 39–67 (FGRR…DPNC), 72–101 (TLTR…RLDV), and 105–131 (WGRL…TAGD).

Belongs to the CDKN2 cyclin-dependent kinase inhibitor family. Heterodimer of CDKN2B with CDK4 or CDK6.

Interacts strongly with CDK4 and CDK6. Potent inhibitor. Potential effector of TGF-beta induced cell cycle arrest. This chain is Cyclin-dependent kinase 4 inhibitor B (CDKN2B), found in Bos taurus (Bovine).